We begin with the raw amino-acid sequence, 548 residues long: DNA ligase (548 aa).

Glutamate 252 provides a ligand contact to ATP. The active-site N6-AMP-lysine intermediate is lysine 254. Residues arginine 259, arginine 274, glutamate 303, phenylalanine 343, arginine 414, and lysine 420 each coordinate ATP.

This sequence belongs to the ATP-dependent DNA ligase family. Mg(2+) is required as a cofactor.

It catalyses the reaction ATP + (deoxyribonucleotide)n-3'-hydroxyl + 5'-phospho-(deoxyribonucleotide)m = (deoxyribonucleotide)n+m + AMP + diphosphate.. Functionally, DNA ligase that seals nicks in double-stranded DNA during DNA replication, DNA recombination and DNA repair. The sequence is that of DNA ligase from Natronomonas pharaonis (strain ATCC 35678 / DSM 2160 / CIP 103997 / JCM 8858 / NBRC 14720 / NCIMB 2260 / Gabara) (Halobacterium pharaonis).